The primary structure comprises 473 residues: Siroheme synthase 1 (473 aa).

The interval 1–204 (MDYFPIFCQL…NDHVQADQHV (204 aa)) is precorrin-2 dehydrogenase /sirohydrochlorin ferrochelatase. NAD(+)-binding positions include 22 to 23 (EI) and 43 to 44 (CE). A Phosphoserine modification is found at Ser-128. Positions 216-473 (GEVVLVGAGP…KVTECVAHVG (258 aa)) are uroporphyrinogen-III C-methyltransferase. Pro-225 serves as a coordination point for S-adenosyl-L-methionine. Asp-248 serves as the catalytic Proton acceptor. Lys-270 serves as the catalytic Proton donor. S-adenosyl-L-methionine contacts are provided by residues 301–303 (GGD), Ile-306, 331–332 (TA), Met-382, and Gly-411.

In the N-terminal section; belongs to the precorrin-2 dehydrogenase / sirohydrochlorin ferrochelatase family. The protein in the C-terminal section; belongs to the precorrin methyltransferase family.

It carries out the reaction uroporphyrinogen III + 2 S-adenosyl-L-methionine = precorrin-2 + 2 S-adenosyl-L-homocysteine + H(+). The enzyme catalyses precorrin-2 + NAD(+) = sirohydrochlorin + NADH + 2 H(+). It catalyses the reaction siroheme + 2 H(+) = sirohydrochlorin + Fe(2+). It functions in the pathway cofactor biosynthesis; adenosylcobalamin biosynthesis; precorrin-2 from uroporphyrinogen III: step 1/1. The protein operates within cofactor biosynthesis; adenosylcobalamin biosynthesis; sirohydrochlorin from precorrin-2: step 1/1. It participates in porphyrin-containing compound metabolism; siroheme biosynthesis; precorrin-2 from uroporphyrinogen III: step 1/1. Its pathway is porphyrin-containing compound metabolism; siroheme biosynthesis; siroheme from sirohydrochlorin: step 1/1. It functions in the pathway porphyrin-containing compound metabolism; siroheme biosynthesis; sirohydrochlorin from precorrin-2: step 1/1. Multifunctional enzyme that catalyzes the SAM-dependent methylations of uroporphyrinogen III at position C-2 and C-7 to form precorrin-2 via precorrin-1. Then it catalyzes the NAD-dependent ring dehydrogenation of precorrin-2 to yield sirohydrochlorin. Finally, it catalyzes the ferrochelation of sirohydrochlorin to yield siroheme. The sequence is that of Siroheme synthase 1 from Yersinia pestis (strain Pestoides F).